Here is a 368-residue protein sequence, read N- to C-terminus: Zinc finger protein 24 (368 aa).

Residue Lys-22 forms a Glycyl lysine isopeptide (Lys-Gly) (interchain with G-Cter in SUMO2) linkage. Residue Lys-27 forms a Glycyl lysine isopeptide (Lys-Gly) (interchain with G-Cter in SUMO1); alternate linkage. Lys-27 is covalently cross-linked (Glycyl lysine isopeptide (Lys-Gly) (interchain with G-Cter in SUMO2); alternate). The 83-residue stretch at 52–134 folds into the SCAN box domain; it reads RQRFRQFGYQ…AVLEDLESEL (83 aa). Phosphoserine is present on residues Ser-132 and Ser-142. Residues Lys-147, Lys-177, and Lys-236 each participate in a glycyl lysine isopeptide (Lys-Gly) (interchain with G-Cter in SUMO2) cross-link. The C2H2-type 1 zinc-finger motif lies at 251–273; that stretch reads HICDECGKHFSQGSALILHQRIH. Positions 251-301 are necessary and sufficient for nuclear localization; sequence HICDECGKHFSQGSALILHQRIHSGEKPYGCVECGKAFSRSSILVQHQRVH. At Ser-274 the chain carries Phosphoserine. Glycyl lysine isopeptide (Lys-Gly) (interchain with G-Cter in SUMO2) cross-links involve residues Lys-277 and Lys-286. 3 consecutive C2H2-type zinc fingers follow at residues 279-301, 307-329, and 335-357; these read YGCV…QRVH, YKCL…QRIH, and YECV…QRRH. Residue Ser-292 is modified to Phosphoserine. At Tyr-335 the chain carries Phosphotyrosine. Residues Lys-361 and Lys-367 each participate in a glycyl lysine isopeptide (Lys-Gly) (interchain with G-Cter in SUMO2) cross-link.

Belongs to the krueppel C2H2-type zinc-finger protein family. In terms of processing, sumoylated. Widely expressed with highest levels in heart, brain, liver, skeletal muscle, kidney and testis and very low levels in spleen and lung.

The protein resides in the nucleus. Transcription factor required for myelination of differentiated oligodendrocytes. Required for the conversion of oligodendrocytes from the premyelinating to the myelinating state. In the developing central nervous system (CNS), involved in the maintenance in the progenitor stage by promoting the cell cycle. Specifically binds to the 5'-TCAT-3' DNA sequence. Has transcription repressor activity in vitro. The sequence is that of Zinc finger protein 24 from Mus musculus (Mouse).